Here is a 151-residue protein sequence, read N- to C-terminus: Extracellular globin-4 (151 aa).

The Globin domain maps to 6 to 151 (CCSYEDRREI…LVARIAKDLP (146 aa)). Cys-7 and Cys-138 are disulfide-bonded. His-101 serves as a coordination point for heme b.

It belongs to the globin family. In terms of assembly, the extracellular hemoglobin of the earthworm consists of 12 subunits that have a hexagonal bilayer structure with a molecular weight near 3.8 million. Each one-twelfth subunit is composed primarily of disulfide linked trimers (chains A, B, and C) and monomers (chain D).

It localises to the secreted. The chain is Extracellular globin-4 from Lumbricus terrestris (Common earthworm).